The sequence spans 94 residues: MLKLNLQFFSSKKGLGSTKNGRDSESKRLGAKRADGQYVTGGSILFRQRGTKIYPGENVGRGGDDTLFAKIDGVVKFERKGRDKKQVSVYAAAE.

The propeptide occupies Met1–Phe9. Positions Lys13 to Lys32 are disordered. A compositionally biased stretch (basic and acidic residues) spans Asn20–Lys32.

It belongs to the bacterial ribosomal protein bL27 family. Post-translationally, the N-terminus is cleaved by ribosomal processing cysteine protease Prp.

This is Large ribosomal subunit protein bL27 from Staphylococcus saprophyticus subsp. saprophyticus (strain ATCC 15305 / DSM 20229 / NCIMB 8711 / NCTC 7292 / S-41).